The primary structure comprises 316 residues: Acetyl-coenzyme A carboxylase carboxyl transferase subunit alpha (316 aa).

Positions 40–293 (LERRSKDALR…GETIENGFRE (254 aa)) constitute a CoA carboxyltransferase C-terminal domain.

The protein belongs to the AccA family. As to quaternary structure, acetyl-CoA carboxylase is a heterohexamer composed of biotin carboxyl carrier protein (AccB), biotin carboxylase (AccC) and two subunits each of ACCase subunit alpha (AccA) and ACCase subunit beta (AccD).

The protein resides in the cytoplasm. It catalyses the reaction N(6)-carboxybiotinyl-L-lysyl-[protein] + acetyl-CoA = N(6)-biotinyl-L-lysyl-[protein] + malonyl-CoA. It participates in lipid metabolism; malonyl-CoA biosynthesis; malonyl-CoA from acetyl-CoA: step 1/1. In terms of biological role, component of the acetyl coenzyme A carboxylase (ACC) complex. First, biotin carboxylase catalyzes the carboxylation of biotin on its carrier protein (BCCP) and then the CO(2) group is transferred by the carboxyltransferase to acetyl-CoA to form malonyl-CoA. The sequence is that of Acetyl-coenzyme A carboxylase carboxyl transferase subunit alpha from Chelativorans sp. (strain BNC1).